The following is a 593-amino-acid chain: NADH-quinone oxidoreductase subunit C/D (593 aa).

The tract at residues 1–184 (MTADNAIFIP…DPYSLTLAKQ (184 aa)) is NADH dehydrogenase I subunit C. Residues 208–593 (DYMFLNLGPN…IDFVMADVDR (386 aa)) are NADH dehydrogenase I subunit D.

This sequence in the N-terminal section; belongs to the complex I 30 kDa subunit family. The protein in the C-terminal section; belongs to the complex I 49 kDa subunit family. As to quaternary structure, NDH-1 is composed of 13 different subunits. Subunits NuoB, CD, E, F, and G constitute the peripheral sector of the complex.

The protein resides in the cell inner membrane. The enzyme catalyses a quinone + NADH + 5 H(+)(in) = a quinol + NAD(+) + 4 H(+)(out). Its function is as follows. NDH-1 shuttles electrons from NADH, via FMN and iron-sulfur (Fe-S) centers, to quinones in the respiratory chain. The immediate electron acceptor for the enzyme in this species is believed to be ubiquinone. Couples the redox reaction to proton translocation (for every two electrons transferred, four hydrogen ions are translocated across the cytoplasmic membrane), and thus conserves the redox energy in a proton gradient. The sequence is that of NADH-quinone oxidoreductase subunit C/D from Pseudomonas putida (strain W619).